The sequence spans 143 residues: Large ribosomal subunit protein uL11 (143 aa).

This sequence belongs to the universal ribosomal protein uL11 family. Part of the ribosomal stalk of the 50S ribosomal subunit. Interacts with L10 and the large rRNA to form the base of the stalk. L10 forms an elongated spine to which L12 dimers bind in a sequential fashion forming a multimeric L10(L12)X complex. In terms of processing, one or more lysine residues are methylated.

In terms of biological role, forms part of the ribosomal stalk which helps the ribosome interact with GTP-bound translation factors. The sequence is that of Large ribosomal subunit protein uL11 from Albidiferax ferrireducens (strain ATCC BAA-621 / DSM 15236 / T118) (Rhodoferax ferrireducens).